Reading from the N-terminus, the 284-residue chain is NAD kinase (284 aa).

The Proton acceptor role is filled by aspartate 70. NAD(+) is bound by residues 70–71 (DG), 139–140 (NE), lysine 167, aspartate 169, leucine 177, 180–185 (TAYNLS), and glutamine 236.

This sequence belongs to the NAD kinase family. A divalent metal cation serves as cofactor.

The protein localises to the cytoplasm. It catalyses the reaction NAD(+) + ATP = ADP + NADP(+) + H(+). Its function is as follows. Involved in the regulation of the intracellular balance of NAD and NADP, and is a key enzyme in the biosynthesis of NADP. Catalyzes specifically the phosphorylation on 2'-hydroxyl of the adenosine moiety of NAD to yield NADP. This is NAD kinase from Helicobacter pylori (strain J99 / ATCC 700824) (Campylobacter pylori J99).